The following is a 704-amino-acid chain: Elongation factor G (704 aa).

In terms of domain architecture, tr-type G spans 9 to 285 (AKVRNIGIMA…AIVAYLPSPL (277 aa)). Residues 18–25 (AHIDAGKT), 82–86 (DTPGH), and 136–139 (NKMD) contribute to the GTP site.

The protein belongs to the TRAFAC class translation factor GTPase superfamily. Classic translation factor GTPase family. EF-G/EF-2 subfamily.

It localises to the cytoplasm. Its function is as follows. Catalyzes the GTP-dependent ribosomal translocation step during translation elongation. During this step, the ribosome changes from the pre-translocational (PRE) to the post-translocational (POST) state as the newly formed A-site-bound peptidyl-tRNA and P-site-bound deacylated tRNA move to the P and E sites, respectively. Catalyzes the coordinated movement of the two tRNA molecules, the mRNA and conformational changes in the ribosome. The polypeptide is Elongation factor G (Thermobifida fusca (strain YX)).